We begin with the raw amino-acid sequence, 182 residues long: UPF0397 protein BA_2640/GBAA_2640/BAS2460 (182 aa).

5 helical membrane-spanning segments follow: residues 9-29 (VVAI…GFSI), 40-60 (AILT…IGLI), 71-91 (WSIW…MGFI), 114-134 (ITGL…DIIV), and 142-162 (IVIQ…VLGL).

The protein belongs to the UPF0397 family.

The protein resides in the cell membrane. The polypeptide is UPF0397 protein BA_2640/GBAA_2640/BAS2460 (Bacillus anthracis).